The following is a 595-amino-acid chain: Flap endonuclease 1 (595 aa).

The interval 1–106 (MGIKGLTKFI…SELEKRGEKR (106 aa)) is N-domain. Asp-34 lines the Mg(2+) pocket. DNA contacts are provided by Arg-47 and Arg-72. Residues Asp-88, Glu-160, Glu-162, Asp-181, and Asp-183 each contribute to the Mg(2+) site. The segment at 124–267 (EIKKQSGRTV…KTAYNLIKEY (144 aa)) is I-domain. Residue Glu-160 coordinates DNA. The DNA site is built by Gly-245 and Asp-247. Asp-247 provides a ligand contact to Mg(2+). Residues 350–358 (TQRRLDNFF) are interaction with PCNA. The interval 370 to 493 (NEESQIKKEV…TGDVYSFPNG (124 aa)) is disordered. Residues 392–401 (NDSSTKLNSK) are compositionally biased toward polar residues. Basic and acidic residues predominate over residues 406-425 (PKGEKESKTEKDDGDTHNGN). Over residues 426–436 (DNEEEGGEGET) the composition is skewed to acidic residues. The span at 461–475 (HKSDSESGNVKKEST) shows a compositional bias: basic and acidic residues.

Belongs to the XPG/RAD2 endonuclease family. FEN1 subfamily. In terms of assembly, interacts with PCNA. Three molecules of FEN1 bind to one PCNA trimer with each molecule binding to one PCNA monomer. PCNA stimulates the nuclease activity without altering cleavage specificity. It depends on Mg(2+) as a cofactor. Phosphorylated. Phosphorylation upon DNA damage induces relocalization to the nuclear plasma.

Its subcellular location is the nucleus. It localises to the nucleolus. The protein localises to the nucleoplasm. The protein resides in the mitochondrion. Functionally, structure-specific nuclease with 5'-flap endonuclease and 5'-3' exonuclease activities involved in DNA replication and repair. During DNA replication, cleaves the 5'-overhanging flap structure that is generated by displacement synthesis when DNA polymerase encounters the 5'-end of a downstream Okazaki fragment. It enters the flap from the 5'-end and then tracks to cleave the flap base, leaving a nick for ligation. Also involved in the long patch base excision repair (LP-BER) pathway, by cleaving within the apurinic/apyrimidinic (AP) site-terminated flap. Acts as a genome stabilization factor that prevents flaps from equilibrating into structures that lead to duplications and deletions. Also possesses 5'-3' exonuclease activity on nicked or gapped double-stranded DNA, and exhibits RNase H activity. Also involved in replication and repair of rDNA and in repairing mitochondrial DNA. The chain is Flap endonuclease 1 from Plasmodium knowlesi (strain H).